We begin with the raw amino-acid sequence, 623 residues long: Kelch-like protein diablo (623 aa).

The segment at 1-54 is disordered; it reads MGDLPGSGSTAQPRDAAVTGTGGNSTAGGGSSVGSTAVDRPPSPARLSHTSEKH. T19 bears the Phosphothreonine mark. The span at 20-32 shows a compositional bias: gly residues; that stretch reads GTGGNSTAGGGSS. One can recognise a BTB domain in the interval 72–139; that stretch reads CDVVLNVGGR…CYTAHIMVEE (68 aa). The BACK domain occupies 174-276; that stretch reads CLGIRAFADT…SPKFLVGTVG (103 aa). 6 Kelch repeats span residues 323–369, 371–417, 418–464, 466–511, 513–558, and 559–605; these read VLFA…VLND, LYAV…VLDG, FLYA…VLGG, LYAI…VFNN, IYAV…VVNG, and QLYA…VMRA.

It participates in protein modification; protein ubiquitination. In terms of biological role, probable substrate-specific adapter of an E3 ubiquitin-protein ligase complex which mediates the ubiquitination and subsequent proteasomal degradation of target proteins. May have a role in synapse differentiation and growth. This chain is Kelch-like protein diablo, found in Drosophila erecta (Fruit fly).